The chain runs to 106 residues: ATP-dependent Clp protease adapter protein ClpS (106 aa).

It belongs to the ClpS family. In terms of assembly, binds to the N-terminal domain of the chaperone ClpA.

Involved in the modulation of the specificity of the ClpAP-mediated ATP-dependent protein degradation. The protein is ATP-dependent Clp protease adapter protein ClpS of Escherichia coli O127:H6 (strain E2348/69 / EPEC).